A 303-amino-acid chain; its full sequence is N-acetyl-D-glucosamine kinase (303 aa).

Residues 4–11 and 133–140 each bind ATP; these read GFDIGGTK and GVGGGLIF. His-157, Cys-177, Cys-179, and Cys-184 together coordinate Zn(2+).

Belongs to the ROK (NagC/XylR) family. NagK subfamily.

It catalyses the reaction N-acetyl-D-glucosamine + ATP = N-acetyl-D-glucosamine 6-phosphate + ADP + H(+). It participates in cell wall biogenesis; peptidoglycan recycling. Catalyzes the phosphorylation of N-acetyl-D-glucosamine (GlcNAc) derived from cell-wall degradation, yielding GlcNAc-6-P. The polypeptide is N-acetyl-D-glucosamine kinase (Escherichia coli O6:H1 (strain CFT073 / ATCC 700928 / UPEC)).